A 216-amino-acid chain; its full sequence is LGTDIISPPVCGNELLEVGEECDCGFPRNCRDPCCDATTCKLHSWVECESGECCGQCKFTSAGNECRPARSECDIAESCTGQSADCPMDDFHRNGQPCLNNFGYCYNGNCPILYHQCYALFGSNVYEAEDSCFERNQKGDDDGYCRKENGEKIPCAPEDVKCGRLYCKDNSPGPNDSCKTFNSNEDDHKEMVLPGTKCADGKVCSNGHCVDVASAY.

Residues 8–94 (PPVCGNELLE…DCPMDDFHRN (87 aa)) enclose the Disintegrin domain. 6 residues coordinate Ca(2+): Val10, Asn13, Leu15, Glu17, Glu20, and Asp23. Cystine bridges form between Cys11-Cys40, Cys22-Cys35, Cys24-Cys30, Cys34-Cys57, Cys48-Cys54, Cys53-Cys79, Cys66-Cys86, Cys73-Cys105, Cys98-Cys110, Cys117-Cys167, Cys132-Cys178, Cys145-Cys155, Cys162-Cys204, and Cys198-Cys209. Positions 72 to 74 (ECD) match the D/ECD-tripeptide motif. An N-linked (GlcNAc...) asparagine glycan is attached at Asn175.

This sequence belongs to the venom metalloproteinase (M12B) family. P-III subfamily. P-IIIa sub-subfamily. Monomer. It depends on Zn(2+) as a cofactor. Expressed by the venom gland.

It localises to the secreted. Functionally, zinc protease from snake venom that induces hemorrhage. This chain is Snake venom metalloproteinase HT-1, found in Crotalus ruber ruber (Red diamond rattlesnake).